A 197-amino-acid chain; its full sequence is Adenine phosphoribosyltransferase (197 aa).

This sequence belongs to the purine/pyrimidine phosphoribosyltransferase family. Homodimer.

Its subcellular location is the cytoplasm. The catalysed reaction is AMP + diphosphate = 5-phospho-alpha-D-ribose 1-diphosphate + adenine. The protein operates within purine metabolism; AMP biosynthesis via salvage pathway; AMP from adenine: step 1/1. Functionally, catalyzes a salvage reaction resulting in the formation of AMP, that is energically less costly than de novo synthesis. The polypeptide is Adenine phosphoribosyltransferase (Ralstonia nicotianae (strain ATCC BAA-1114 / GMI1000) (Ralstonia solanacearum)).